A 313-amino-acid chain; its full sequence is Ribosomal RNA small subunit methyltransferase H (313 aa).

Residues Gly35 to His37, Asp55, Phe79, Asp101, and Gln108 contribute to the S-adenosyl-L-methionine site.

It belongs to the methyltransferase superfamily. RsmH family.

It localises to the cytoplasm. The enzyme catalyses cytidine(1402) in 16S rRNA + S-adenosyl-L-methionine = N(4)-methylcytidine(1402) in 16S rRNA + S-adenosyl-L-homocysteine + H(+). Specifically methylates the N4 position of cytidine in position 1402 (C1402) of 16S rRNA. This is Ribosomal RNA small subunit methyltransferase H from Escherichia coli O127:H6 (strain E2348/69 / EPEC).